Consider the following 665-residue polypeptide: Sodium-dependent phosphate transporter 1-B (665 aa).

The next 6 helical transmembrane spans lie at 26 to 46 (YMWL…SVGA), 67 to 87 (ACIL…AKVS), 107 to 127 (LMAG…AASF), 163 to 183 (IVAS…VLFY), 202 to 222 (ALPF…MFTG), and 235 to 255 (GVLL…WFAV). 2 disordered regions span residues 294-345 (VPEE…APKT) and 423-442 (ESEF…AQER). Over residues 296-306 (EESSVLSSSTP) the composition is skewed to low complexity. Over residues 329-338 (ADQKDCKESD) the composition is skewed to basic and acidic residues. 4 consecutive transmembrane segments (helical) span residues 499–519 (VSML…FAHG), 548–568 (TPIW…WVWG), 588–608 (FSIE…GLPV), and 638–658 (IFMA…AIMA).

This sequence belongs to the inorganic phosphate transporter (PiT) (TC 2.A.20) family.

The protein resides in the membrane. Sodium-phosphate symporter which plays a fundamental housekeeping role in phosphate transport. The polypeptide is Sodium-dependent phosphate transporter 1-B (slc20a1b) (Danio rerio (Zebrafish)).